We begin with the raw amino-acid sequence, 108 residues long: Protein YcgL (108 aa).

Positions 12–96 (MFCVIYRSSK…PPEDLLKQHL (85 aa)) constitute a YcgL domain.

The sequence is that of Protein YcgL from Escherichia coli O127:H6 (strain E2348/69 / EPEC).